Reading from the N-terminus, the 100-residue chain is MIGKQATLCDIVLEELVLPIDLHCHEELPELPEELEESVVEEEPEYTPYKIVVYCGGCDTKLKLYILATLSGIRDFQTSLLGPVKLLCPTCREEIRNGRR.

Positions 1 to 43 (MIGKQATLCDIVLEELVLPIDLHCHEELPELPEELEESVVEEE) are E7 terminal domain. Positions 22 to 26 (LHCHE) match the LXCXE motif; interaction with host RB1 and TMEM173/STING motif. A zinc finger lies at 55 to 91 (CGGCDTKLKLYILATLSGIRDFQTSLLGPVKLLCPTC). The short motif at 73–81 (IRDFQTSLL) is the Nuclear export signal element.

Belongs to the papillomaviridae E7 protein family. As to quaternary structure, homodimer. Homooligomer. Interacts with host RB1; this interaction induces dissociation of RB1-E2F1 complex thereby disrupting RB1 activity. Interacts with host EP300; this interaction represses EP300 transcriptional activity. Interacts with protein E2; this interaction inhibits E7 oncogenic activity. Interacts with host TMEM173/STING; this interaction impairs the ability of TMEM173/STING to sense cytosolic DNA and promote the production of type I interferon (IFN-alpha and IFN-beta). Post-translationally, highly phosphorylated.

The protein resides in the host cytoplasm. It localises to the host nucleus. Plays a role in viral genome replication by driving entry of quiescent cells into the cell cycle. Stimulation of progression from G1 to S phase allows the virus to efficiently use the cellular DNA replicating machinery to achieve viral genome replication. E7 protein has both transforming and trans-activating activities. Induces the disassembly of the E2F1 transcription factor from RB1, with subsequent transcriptional activation of E2F1-regulated S-phase genes. Interferes with host histone deacetylation mediated by HDAC1 and HDAC2, leading to transcription activation. Also plays a role in the inhibition of both antiviral and antiproliferative functions of host interferon alpha. Interaction with host TMEM173/STING impairs the ability of TMEM173/STING to sense cytosolic DNA and promote the production of type I interferon (IFN-alpha and IFN-beta). The sequence is that of Protein E7 from Human papillomavirus 22.